Here is a 169-residue protein sequence, read N- to C-terminus: Photosystem I assembly protein Ycf3 (169 aa).

TPR repeat units follow at residues 36-69 (AFTYYRDGMSAQSEGNYAEALQNYYEAMRLEIDP), 73-106 (SYILYNIGLIHTRNGEHTKALEYYFRALERNPFL), and 121-154 (GEQAIRQGDSEIAEAWFNQAAEYWKQAIALTPGN).

It belongs to the Ycf3 family.

The protein localises to the plastid. Its subcellular location is the chloroplast thylakoid membrane. Functionally, essential for the assembly of the photosystem I (PSI) complex. May act as a chaperone-like factor to guide the assembly of the PSI subunits. The chain is Photosystem I assembly protein Ycf3 from Cucumis sativus (Cucumber).